Consider the following 195-residue polypeptide: Large ribosomal subunit protein uL5 (195 aa).

This sequence belongs to the universal ribosomal protein uL5 family. As to quaternary structure, part of the 50S ribosomal subunit; part of the 5S rRNA/L5/L18/L25 subcomplex. Contacts the 5S rRNA and the P site tRNA. Forms a bridge to the 30S subunit in the 70S ribosome.

Its function is as follows. This is one of the proteins that bind and probably mediate the attachment of the 5S RNA into the large ribosomal subunit, where it forms part of the central protuberance. In the 70S ribosome it contacts protein S13 of the 30S subunit (bridge B1b), connecting the 2 subunits; this bridge is implicated in subunit movement. Contacts the P site tRNA; the 5S rRNA and some of its associated proteins might help stabilize positioning of ribosome-bound tRNAs. The chain is Large ribosomal subunit protein uL5 from Pelodictyon phaeoclathratiforme (strain DSM 5477 / BU-1).